A 236-amino-acid polypeptide reads, in one-letter code: Small ribosomal subunit protein uS3 (236 aa).

Residues 39–107 (IRSYVMEELK…ETSLNIVEIR (69 aa)) enclose the KH type-2 domain. Residues 214 to 236 (ASEHRATRNDNSSSSLNRRRESV) are disordered.

This sequence belongs to the universal ribosomal protein uS3 family. In terms of assembly, part of the 30S ribosomal subunit. Forms a tight complex with proteins S10 and S14.

Its function is as follows. Binds the lower part of the 30S subunit head. Binds mRNA in the 70S ribosome, positioning it for translation. This Bartonella bacilliformis (strain ATCC 35685 / KC583 / Herrer 020/F12,63) protein is Small ribosomal subunit protein uS3.